A 78-amino-acid chain; its full sequence is Small ribosomal subunit protein bS20 (78 aa).

The protein belongs to the bacterial ribosomal protein bS20 family.

Binds directly to 16S ribosomal RNA. The chain is Small ribosomal subunit protein bS20 from Streptococcus pneumoniae serotype 4 (strain ATCC BAA-334 / TIGR4).